Consider the following 343-residue polypeptide: Peroxisome assembly protein 12 (343 aa).

The Peroxisomal matrix segment spans residues 1-5; that stretch reads MDSPS. Residues 6–33 traverse the membrane as a helical segment; sequence LLEVLQVQQVEKLISPSLRFILAYFTHR. The Cytoplasmic portion of the chain corresponds to 34 to 37; sequence YPRF. The helical transmembrane segment at 38 to 62 threads the bilayer; sequence LLRAYNSFDGIYLLVKLLLEKSQLK. The Peroxisomal matrix segment spans residues 63–102; that stretch reads KWNATSVERRFQLKRVIAVRDSSIIAEEFPQESESATSLN. The helical transmembrane segment at 103–140 threads the bilayer; it reads GIDVLKKLFLTYCIPYLLEKCESLTTVKENHTAVSILS. Residues 141-146 are Cytoplasmic-facing; sequence LQARDK. The chain crosses the membrane as a helical span at residues 147 to 193; sequence QKGALSVFYSKIKILLVRLKKILHFVFRLIRKSNTYLQWLYYLLYAL. Topologically, residues 194–238 are peroxisomal matrix; the sequence is GKTPYTNLADHILRQRVIYNVENIHSRKLISTREKSSLLTSIADH. A helical membrane pass occupies residues 239–266; the sequence is SMEGFLIIIQLIDWWQSNNYESHLKKGE. The Cytoplasmic segment spans residues 267–343; that stretch reads VAFTELAPPK…KGESFWRLMI (77 aa). Zn(2+) contacts are provided by C289, C292, C309, and C312. The RING-type; degenerate zinc-finger motif lies at 289-328; the sequence is CKICGEKIKNPAVLSTGFVFCYPCIQVWLQRHPFKCPVTN.

The protein belongs to the pex2/pex10/pex12 family. As to quaternary structure, component of the PEX2-PEX10-PEX12 retrotranslocation channel, composed of PEX2, PEX10 and PEX12.

The protein localises to the peroxisome membrane. Its pathway is protein modification; protein ubiquitination. Functionally, component of a retrotranslocation channel required for peroxisome organization by mediating export of the PEX5 receptor from peroxisomes to the cytosol, thereby promoting PEX5 recycling. The retrotranslocation channel is composed of PEX2, PEX10 and PEX12; each subunit contributing transmembrane segments that coassemble into an open channel that specifically allows the passage of PEX5 through the peroxisomal membrane. PEX12 also regulates PEX5 recycling by activating the E3 ubiquitin-protein ligase activity of PEX10. When PEX5 recycling is compromised, PEX12 stimulates PEX10-mediated polyubiquitination of PEX5, leading to its subsequent degradation. This chain is Peroxisome assembly protein 12 (pex12), found in Schizosaccharomyces pombe (strain 972 / ATCC 24843) (Fission yeast).